A 316-amino-acid chain; its full sequence is D-alanine--D-alanine ligase (316 aa).

The ATP-grasp domain maps to 104–303 (KRVWLQHGLP…YADLCVAILA (200 aa)). Residue 130–185 (PDRLGLPLILKPPHEGSTVGITKVAGYSDMKAAYELAARFDAEVLAEQFITGRELT) participates in ATP binding. Mg(2+) contacts are provided by D257, E270, and N272.

The protein belongs to the D-alanine--D-alanine ligase family. Requires Mg(2+) as cofactor. Mn(2+) serves as cofactor.

It is found in the cytoplasm. It carries out the reaction 2 D-alanine + ATP = D-alanyl-D-alanine + ADP + phosphate + H(+). The protein operates within cell wall biogenesis; peptidoglycan biosynthesis. In terms of biological role, cell wall formation. The polypeptide is D-alanine--D-alanine ligase (Bordetella bronchiseptica (strain ATCC BAA-588 / NCTC 13252 / RB50) (Alcaligenes bronchisepticus)).